Consider the following 342-residue polypeptide: Heat-inducible transcription repressor HrcA (342 aa).

This sequence belongs to the HrcA family.

Negative regulator of class I heat shock genes (grpE-dnaK-dnaJ and groELS operons). Prevents heat-shock induction of these operons. The polypeptide is Heat-inducible transcription repressor HrcA (Leptospira interrogans serogroup Icterohaemorrhagiae serovar copenhageni (strain Fiocruz L1-130)).